A 216-amino-acid chain; its full sequence is Large ribosomal subunit protein uL24m (216 aa).

A mitochondrion-targeting transit peptide spans 1-9; that stretch reads MRLSALLAL. At serine 24 the chain carries Phosphoserine. In terms of domain architecture, KOW spans 56–89; that stretch reads LFCGDMVEILEGKDAGKQGKVVQVVRQRNWVVLE.

The protein belongs to the universal ribosomal protein uL24 family. In terms of assembly, component of the mitochondrial ribosome large subunit (39S) which comprises a 16S rRNA and about 50 distinct proteins.

It is found in the mitochondrion. In Mus musculus (Mouse), this protein is Large ribosomal subunit protein uL24m (Mrpl24).